Reading from the N-terminus, the 338-residue chain is H(2)-forming methylenetetrahydromethanopterin dehydrogenase-related protein MJ0715 (338 aa).

Belongs to the HMD family.

The sequence is that of H(2)-forming methylenetetrahydromethanopterin dehydrogenase-related protein MJ0715 from Methanocaldococcus jannaschii (strain ATCC 43067 / DSM 2661 / JAL-1 / JCM 10045 / NBRC 100440) (Methanococcus jannaschii).